We begin with the raw amino-acid sequence, 221 residues long: UPF0758 protein HI_0952 (221 aa).

The region spanning 99-221 is the MPN domain; the sequence is IINDPETVKL…CYSFAENCLL (123 aa). Zn(2+) is bound by residues H170, H172, and D183. Positions 170-183 match the JAMM motif motif; it reads HNHPSGITEPSYSD.

It belongs to the UPF0758 family.

The chain is UPF0758 protein HI_0952 from Haemophilus influenzae (strain ATCC 51907 / DSM 11121 / KW20 / Rd).